A 127-amino-acid polypeptide reads, in one-letter code: Large ribosomal subunit protein bL21 (127 aa).

It belongs to the bacterial ribosomal protein bL21 family. As to quaternary structure, part of the 50S ribosomal subunit. Contacts protein L20.

Its function is as follows. This protein binds to 23S rRNA in the presence of protein L20. In Blochmanniella floridana, this protein is Large ribosomal subunit protein bL21.